The primary structure comprises 67 residues: Brevinin-1CDYa (67 aa).

Positions 1 to 22 (MFTLKKSLLLIFFLGTINLSLC) are cleaved as a signal peptide. A propeptide spanning residues 23–45 (EEERNADEEERRDDLEERDVEVE) is cleaved from the precursor. The cysteines at positions 61 and 67 are disulfide-linked.

Belongs to the frog skin active peptide (FSAP) family. Brevinin subfamily. As to expression, expressed by the skin glands.

The protein resides in the secreted. Its function is as follows. Antimicrobial peptide. Has low activity against the Gram-positive bacterium S.aureus (MIC=12.5 uM) and the Gram-negative bacterium E.coli (MIC=25 uM). Has weak hemolytic activity against human erythrocytes. In Rana dybowskii (Dybovsky's frog), this protein is Brevinin-1CDYa.